Reading from the N-terminus, the 735-residue chain is MIP-related peptides (735 aa).

An N-terminal signal peptide occupies residues 1–20; it reads MCTRPGLAALLVLMTSCASS. A propeptide spanning residues 21 to 135 is cleaved from the precursor; that stretch reads FSRADTQSAS…EDSDTKVDTR (115 aa). A compositionally biased stretch (low complexity) spans 33–65; sequence ALSAASADAQAARQQQEQHLVAQQQQQQQQQQQ. Disordered stretches follow at residues 33–212 and 229–251; these read ALSA…FGKK and FGKKSSGESAGDSGYISVASRGS. Polar residues-rich tracts occupy residues 66–76 and 101–125; these read HSNNNEPQQRA and PVSQPDLSPDFSNPMGSSLSQSGTP. A phenylalanine amide mark is found at Phe142, Phe153, and Phe164. A compositionally biased stretch (basic residues) spans 142 to 159; that stretch reads FGKKRGQAPRFFGKKRAM. The propeptide occupies 168–184; it reads SSEFPTSNSEQLALDTR. A Phenylalanine amide modification is found at Phe190. Positions 194-203 are excised as a propeptide; sequence SFPESNREQR. The segment covering 194–204 has biased composition (basic and acidic residues); sequence SFPESNREQRG. Phenylalanine amide is present on residues Phe209 and Phe229. Positions 214–229 are cleaved as a propeptide — linker peptide; the sequence is FDENVDIDERAAPRFF. Positions 233 to 249 are excised as a propeptide; sequence SSGESAGDSGYISVASR. Position 255 is a phenylalanine amide (Phe255). Positions 259-267 are cleaved as a propeptide — linker peptide; the sequence is QDDDIMIAA. The residue at position 274 (Phe274) is a Phenylalanine amide. A propeptide spans 279 to 287 (linker peptide); the sequence is SDDNVALDL. Residue Phe294 is modified to Phenylalanine amide. Positions 298–311 are excised as a propeptide; it reads QSSDLDDEISVALR. Residue Phe317 is modified to Phenylalanine amide. The propeptide occupies 321–332; sequence RADDEDILLGER. The residue at position 338 (Phe338) is a Phenylalanine amide. Positions 342–353 are excised as a propeptide; sequence RANDENISFSLR. 2 disordered regions span residues 352-373 and 381-400; these read LRGSPRFFGKKRSDESDDDNIG and RFFGKKRSDETDDENIGLMA. Residue Phe359 is modified to Phenylalanine amide. Positions 363–377 are excised as a propeptide; it reads RSDESDDDNIGLVAR. Phe383 carries the post-translational modification Phenylalanine amide. The propeptide occupies 387–401; sequence RSDETDDENIGLMAR. Phe407 is modified (phenylalanine amide). The propeptide at 412–426 is linker peptide; sequence SDGLDDGGNIIDVAT. The tract at residues 430–464 is disordered; sequence PRFFGKKRSNSDSSDKSSDSALSSSESGRQTRQAP. Phe433 carries the post-translational modification Phenylalanine amide. A propeptide spanning residues 437 to 461 is cleaved from the precursor; it reads RSNSDSSDKSSDSALSSSESGRQTR. Residues 438–447 show a composition bias toward basic and acidic residues; it reads SNSDSSDKSS. At Gln462 the chain carries Pyrrolidone carboxylic acid. Position 467 is a phenylalanine amide (Phe467). Positions 471 to 493 are excised as a propeptide; that stretch reads YVDEHHVSKRAAATAFPLIIEAR. Pyrrolidone carboxylic acid is present on Gln494. The residue at position 499 (Phe499) is a Phenylalanine amide. A propeptide spanning residues 503-509 is cleaved from the precursor; it reads EYRYPPR. Ile515 carries the isoleucine amide modification. Residues 519-546 constitute a propeptide that is removed on maturation; that stretch reads FSLYRSPGKYSLSSPYMSAKEFKETFRR. A Methionine amide modification is found at Met552. The propeptide occupies 556–585; sequence TAELNEEGSDDFTNDDTDDENEYDETVLFK. Position 592 is a valine amide (Val592). Leu601 is modified (leucine amide). Ile610 is modified (isoleucine amide). Position 619 is a valine amide (Val619). Position 628 is an isoleucine amide (Ile628). The propeptide at 632–661 is linker peptide; that stretch reads DLDWYQKALCAEADILELDDCADFLGNDDV. Gln664 bears the Pyrrolidone carboxylic acid mark. The residue at position 669 (Ile669) is an Isoleucine amide. A propeptide spans 674–705 (linker peptide); that stretch reads GEDVSERDYAQLLEALSRLQAIKQIKARIQNE. Position 714 is a valine amide (Val714). Residues 715–735 constitute a propeptide that is removed on maturation; it reads GRRSEYNLGPFDEFVDESMER.

In terms of tissue distribution, expressed in the CNS and peripheral tissues (the digestive tract, vasculature, and the reproductive organs).

Its subcellular location is the secreted. In terms of biological role, has some structural and functional features similar to vertebrate opioid peptides. AMRPs are inhibitory on Aplysia esophagus, penis retractor muscle, and body wall muscle. The chain is MIP-related peptides (MRP) from Aplysia californica (California sea hare).